The sequence spans 115 residues: Replication initiation control protein YabA (115 aa).

Residues H90, C92, C106, and C109 each contribute to the Zn(2+) site.

It belongs to the YabA family. As to quaternary structure, homotetramer. Interacts with both DnaA and DnaN, acting as a bridge between these two proteins. Zn(2+) is required as a cofactor.

Its subcellular location is the cytoplasm. It is found in the nucleoid. In terms of biological role, involved in control of chromosome replication initiation. Inhibits the cooperative binding of DnaA to the oriC region, thus negatively regulating initiation of chromosome replication. Inhibits the ability of DnaA-ATP to form a helix on DNA; does not disassemble preformed DnaA-DNA helices. Decreases the residence time of DnaA on the chromosome at its binding sites (oriC, replication forks and promoter-binding sites). Tethers DnaA to the replication machinery via the DNA polymerase beta sliding clamp subunit (dnaN). Associates with oriC and other DnaA targets on the chromosome in a DnaA-dependent manner. This chain is Replication initiation control protein YabA, found in Staphylococcus aureus (strain JH1).